The following is a 46-amino-acid chain: Apamin (46 aa).

An N-terminal signal peptide occupies residues 1–27 (MISMLRCISLFLSVILITGYFVTPVMS). 2 cysteine pairs are disulfide-bonded: Cys28-Cys38 and Cys30-Cys42. The tract at residues 40 to 41 (RR) is essential for toxin activity. His45 is subject to Histidine amide.

As to expression, expressed by the venom gland.

It localises to the secreted. In terms of biological role, neurotoxin that blocks voltage-independent calcium-activated potassium channels (KCNN1=SK1, KCNN2=SK2, KCNN3=SK3). The protein is Apamin of Apis cerana cerana (Oriental honeybee).